Here is a 550-residue protein sequence, read N- to C-terminus: Natural resistance-associated macrophage protein 1 (550 aa).

The segment at 1-45 is disordered; the sequence is MTGDKGPQRLSGSSYGSISSPTSPTSPGPQQAPPRETYLSEKIPI. At 1–58 the chain is on the cytoplasmic side; it reads MTGDKGPQRLSGSSYGSISSPTSPTSPGPQQAPPRETYLSEKIPIPDTKPGTFSLRKL. A compositionally biased stretch (low complexity) spans 11 to 23; that stretch reads SGSSYGSISSPTS. Residues 59–76 form a helical membrane-spanning segment; the sequence is WAFTGPGFLMSIAFLDPG. The Extracellular segment spans residues 77–85; sequence NIESDLQAG. Residues 86-105 traverse the membrane as a helical segment; sequence AVAGFKLLWVLLWATVLGLL. Residues 106-142 are Cytoplasmic-facing; it reads CQRLAARLGVVTGKDLGEVCHLYYPKVPRTVLWLTIE. A helical transmembrane segment spans residues 143-163; the sequence is LAIVGSDMQEVIGTAIAFNLL. Residues 164 to 167 lie on the Extracellular side of the membrane; it reads SAGR. The helical transmembrane segment at 168-187 threads the bilayer; it reads IPLWGGVLITIVDTFFFLFL. Residues 188-196 are Cytoplasmic-facing; it reads DNYGLRKLE. The helical transmembrane segment at 197 to 217 threads the bilayer; sequence AFFGLLITIMALTFGYEYVVA. The Extracellular segment spans residues 218–240; that stretch reads RPEQGALLRGLFLPSCPGCGHPE. Residues 241 to 259 form a helical membrane-spanning segment; it reads LLQAVGIVGAIIMPHNIYL. At 260–287 the chain is on the cytoplasmic side; sequence HSALVKSREIDRARRADIREANMYFLIE. Residues 288 to 307 form a helical membrane-spanning segment; the sequence is ATIALSVSFIINLFVMAVFG. Residues 308–349 are Extracellular-facing; that stretch reads QAFYQKTNQAAFNICANSSLHDYAKIFPMNNATVAVDIYQGG. N-linked (GlcNAc...) asparagine glycosylation is found at Asn-324 and Asn-338. The chain crosses the membrane as a helical span at residues 350-369; it reads VILGCLFGPAALYIWAIGLL. The Cytoplasmic segment spans residues 370 to 400; the sequence is AAGQSSTMTGTYAGQFVMEGFLRLRWSRFAR. A helical membrane pass occupies residues 401-418; that stretch reads VLLTRSCAILPTVLVAVF. Topologically, residues 419-429 are extracellular; that stretch reads RDLRDLSGLND. Residues 430-450 form a helical membrane-spanning segment; that stretch reads LLNVLQSLLLPFAVLPILTFT. Topologically, residues 451-466 are cytoplasmic; it reads SMPTLMQEFANGLLNK. A helical membrane pass occupies residues 467–488; the sequence is VVTSSIMVLVCAINLYFVVSYL. The Extracellular segment spans residues 489 to 496; sequence PSLPHPAY. A helical membrane pass occupies residues 497 to 516; the sequence is FGLAALLAAAYLGLSTYLVW. Over 517-550 the chain is Cytoplasmic; the sequence is TCCLAHGATFLAHSSHHHFLYGLLEEDQKGETSG.

This sequence belongs to the NRAMP family. As to expression, macrophages; peripheral blood leukocytes, lung, spleen and liver.

The protein resides in the late endosome membrane. Its subcellular location is the lysosome membrane. The catalysed reaction is Zn(2+)(in) + H(+)(out) = Zn(2+)(out) + H(+)(in). The enzyme catalyses Fe(2+)(in) + H(+)(out) = Fe(2+)(out) + H(+)(in). It catalyses the reaction Mn(2+)(in) + H(+)(out) = Mn(2+)(out) + H(+)(in). In terms of biological role, macrophage-specific antiporter that fluxes metal ions in either direction against a proton gradient. Localized to late endosomal lysosomal membranes, delivers bivalent cations from the cytosol into these acidic compartments where they may directly affect antimicrobial activity. Involved in iron metabolism and host natural resistance to infection with intracellular parasites. Pathogen resistance involves sequestration of Fe(2+) and Mn(2+), cofactors of both prokaryotic and eukaryotic catalases and superoxide dismutases, not only to protect the macrophage against its own generation of reactive oxygen species, but to deny the cations to the pathogen for synthesis of its protective enzymes. The protein is Natural resistance-associated macrophage protein 1 of Homo sapiens (Human).